Here is an 841-residue protein sequence, read N- to C-terminus: Protein translocase subunit SecA (841 aa).

ATP contacts are provided by residues Gln-87, Gly-105–Thr-109, and Asp-494. Positions 825, 827, 836, and 837 each coordinate Zn(2+).

This sequence belongs to the SecA family. In terms of assembly, monomer and homodimer. Part of the essential Sec protein translocation apparatus which comprises SecA, SecYEG and auxiliary proteins SecDF-YajC and YidC. The cofactor is Zn(2+).

Its subcellular location is the cell inner membrane. It is found in the cytoplasm. The enzyme catalyses ATP + H2O + cellular proteinSide 1 = ADP + phosphate + cellular proteinSide 2.. Functionally, part of the Sec protein translocase complex. Interacts with the SecYEG preprotein conducting channel. Has a central role in coupling the hydrolysis of ATP to the transfer of proteins into and across the cell membrane, serving as an ATP-driven molecular motor driving the stepwise translocation of polypeptide chains across the membrane. The chain is Protein translocase subunit SecA from Syntrophus aciditrophicus (strain SB).